We begin with the raw amino-acid sequence, 270 residues long: Gap junction beta-3 protein (270 aa).

At 1-20 (MDWKTLQALLSGVNKYSTAF) the chain is on the cytoplasmic side. The helical transmembrane segment at 21–40 (GRIWLSVVFVFRVLVYVVAA) threads the bilayer. Residues 41–75 (ERVWGDEQKDFDCNTKQPGCTNVCYDNYFPISNIR) are Extracellular-facing. A helical membrane pass occupies residues 76-98 (LWALQLIFVTCPSLLVILHVAYR). The Cytoplasmic segment spans residues 99 to 126 (EERERRHRQKHGDQCAKLYDNAGKKHGG). The chain crosses the membrane as a helical span at residues 127-149 (LWWTYLFSLIFKLIIEFLFLYLL). Residues 150 to 187 (HTLWHGFNMPRLVQCANVAPCPNIVDCYIARPTEKKIF) lie on the Extracellular side of the membrane. A helical transmembrane segment spans residues 188-210 (TYFMVGASAVCIVLTICELCYLI). The Cytoplasmic portion of the chain corresponds to 211-270 (CHRVLRGLHKDKPRGGCSPSSSASRASTCRCHHKLVEAGEVDPDPGNNKLQASAPNLTPI). Positions 250–270 (EVDPDPGNNKLQASAPNLTPI) are disordered. Polar residues predominate over residues 258–270 (NKLQASAPNLTPI).

It belongs to the connexin family. Beta-type (group I) subfamily. In terms of assembly, a connexon is composed of a hexamer of connexins. Interacts with CNST.

The protein resides in the cell membrane. It is found in the cell junction. The protein localises to the gap junction. Functionally, one gap junction consists of a cluster of closely packed pairs of transmembrane channels, the connexons, through which materials of low MW diffuse from one cell to a neighboring cell. The polypeptide is Gap junction beta-3 protein (GJB3) (Homo sapiens (Human)).